We begin with the raw amino-acid sequence, 455 residues long: Argininosuccinate lyase (455 aa).

It belongs to the lyase 1 family. Argininosuccinate lyase subfamily.

It is found in the cytoplasm. The enzyme catalyses 2-(N(omega)-L-arginino)succinate = fumarate + L-arginine. It participates in amino-acid biosynthesis; L-arginine biosynthesis; L-arginine from L-ornithine and carbamoyl phosphate: step 3/3. The polypeptide is Argininosuccinate lyase (Roseiflexus castenholzii (strain DSM 13941 / HLO8)).